Consider the following 72-residue polypeptide: Translation initiation factor IF-1 (72 aa).

Residues 1–72 (MSKEDMIEFS…TKGRITFRFK (72 aa)) form the S1-like domain.

The protein belongs to the IF-1 family. In terms of assembly, component of the 30S ribosomal translation pre-initiation complex which assembles on the 30S ribosome in the order IF-2 and IF-3, IF-1 and N-formylmethionyl-tRNA(fMet); mRNA recruitment can occur at any time during PIC assembly.

Its subcellular location is the cytoplasm. Functionally, one of the essential components for the initiation of protein synthesis. Stabilizes the binding of IF-2 and IF-3 on the 30S subunit to which N-formylmethionyl-tRNA(fMet) subsequently binds. Helps modulate mRNA selection, yielding the 30S pre-initiation complex (PIC). Upon addition of the 50S ribosomal subunit IF-1, IF-2 and IF-3 are released leaving the mature 70S translation initiation complex. This Acidiphilium cryptum (strain JF-5) protein is Translation initiation factor IF-1.